A 128-amino-acid chain; its full sequence is Large ribosomal subunit protein bL17 (128 aa).

The protein belongs to the bacterial ribosomal protein bL17 family. Part of the 50S ribosomal subunit. Contacts protein L32.

The chain is Large ribosomal subunit protein bL17 from Pseudomonas syringae pv. syringae (strain B728a).